Consider the following 232-residue polypeptide: CMP-N,N'-diacetyllegionaminic acid synthase (232 aa).

This sequence belongs to the CMP-NeuNAc synthase family.

The enzyme catalyses N,N-diacetyllegionaminate + CTP = CMP-N,N-diacetyllegionaminate + diphosphate. Its function is as follows. Involved in biosynthesis of legionaminic acid (5,7-diamino-3,5,7,9-tetradeoxy-D-glycero-D-galacto-non-2-ulosonic acid)(Leg), a sialic acid-like derivative that is incorporated into virulence-associated cell surface glycoconjugates such as lipopolysaccharide (LPS) which could be a key determinant in the ability of L.pneumophila to inhibit the fusion of phagosomes with lysosomes. LPS contains a majority alpha2,4-linked homomer of legionaminic acid. Catalyzes the conversion of N,N'-diacetyllegionaminic acid (Leg5Ac7Ac) and CTP into CMP-N,N'-diacetyllegionaminic acid (CMP-Leg5Ac7Ac). This Legionella pneumophila subsp. pneumophila (strain Philadelphia 1 / ATCC 33152 / DSM 7513) protein is CMP-N,N'-diacetyllegionaminic acid synthase (neuA).